Reading from the N-terminus, the 448-residue chain is Phosphoglucosamine mutase (448 aa).

The active-site Phosphoserine intermediate is serine 100. The Mg(2+) site is built by serine 100, aspartate 240, aspartate 242, and aspartate 244. Position 100 is a phosphoserine (serine 100).

It belongs to the phosphohexose mutase family. Mg(2+) serves as cofactor. Post-translationally, activated by phosphorylation.

It carries out the reaction alpha-D-glucosamine 1-phosphate = D-glucosamine 6-phosphate. Functionally, catalyzes the conversion of glucosamine-6-phosphate to glucosamine-1-phosphate. This chain is Phosphoglucosamine mutase, found in Clostridium perfringens (strain SM101 / Type A).